Here is a 418-residue protein sequence, read N- to C-terminus: Transcription termination factor Rho (418 aa).

The Rho RNA-BD domain occupies 48–123 (DIYGDGVLEI…LKVNDINFDR (76 aa)). ATP-binding positions include 169–174 (GKGQRG), 181–186 (KAGKTM), and Arg-212.

It belongs to the Rho family. In terms of assembly, homohexamer. The homohexamer assembles into an open ring structure.

Its function is as follows. Facilitates transcription termination by a mechanism that involves Rho binding to the nascent RNA, activation of Rho's RNA-dependent ATPase activity, and release of the mRNA from the DNA template. The chain is Transcription termination factor Rho from Allochromatium vinosum (strain ATCC 17899 / DSM 180 / NBRC 103801 / NCIMB 10441 / D) (Chromatium vinosum).